The sequence spans 497 residues: Galactose-1-phosphate uridylyltransferase (497 aa).

This sequence belongs to the galactose-1-phosphate uridylyltransferase type 2 family.

It localises to the cytoplasm. The catalysed reaction is alpha-D-galactose 1-phosphate + UDP-alpha-D-glucose = alpha-D-glucose 1-phosphate + UDP-alpha-D-galactose. Its pathway is carbohydrate metabolism; galactose metabolism. This is Galactose-1-phosphate uridylyltransferase from Enterococcus faecalis (strain ATCC 700802 / V583).